A 185-amino-acid polypeptide reads, in one-letter code: Early nodulin-like protein 17 (185 aa).

The signal sequence occupies residues 1 to 21; the sequence is MARRDQLVSFLCFFLIVSAVA. The region spanning 37–137 is the Phytocyanin domain; sequence KQYVVGGRSG…GQRLMINVDS (101 aa). Asn79 and Asn94 each carry an N-linked (GlcNAc...) asparagine glycan. A disulfide bond links Cys93 and Cys125. The disordered stretch occupies residues 136–155; sequence DSAPSPSPSPSPAPQEAATA. Ser156 carries GPI-anchor amidated serine lipidation. The propeptide at 157-185 is removed in mature form; it reads AATSSSAATAAHALLLAAMAMMGLILGEW.

It belongs to the early nodulin-like (ENODL) family. In terms of tissue distribution, expressed ubiquitously. Accumulates mainly in anthers, stigmas and ovaries.

It localises to the cell membrane. May act as a carbohydrate transporter. Required for male fertility and seed yield. The protein is Early nodulin-like protein 17 of Oryza sativa subsp. japonica (Rice).